Here is a 455-residue protein sequence, read N- to C-terminus: Epoxide hydrolase 1 (455 aa).

Residues 1–21 traverse the membrane as a helical; Signal-anchor for type III membrane protein segment; that stretch reads MWLELILASVLGFVIYWFVSR. Over 22–455 the chain is Cytoplasmic; that stretch reads DKEETLPLED…RKFVSLAELQ (434 aa). D226 acts as the Nucleophile in catalysis. R295 is subject to Dimethylated arginine. Y374 functions as the Proton donor in the catalytic mechanism. Residue H431 is the Proton acceptor of the active site. K439 carries the post-translational modification N6-acetyllysine.

This sequence belongs to the peptidase S33 family.

The protein resides in the microsome membrane. It is found in the endoplasmic reticulum membrane. It catalyses the reaction cis-stilbene oxide + H2O = (1R,2R)-hydrobenzoin. The catalysed reaction is 1-(4-methoxyphenyl)-N-methyl-N-[(3-methyloxetan-3-yl)methyl]methanamine + H2O = 2-{[(4-methoxybenzyl)(methyl)amino]methyl}-2-methylpropane-1,3-diol. It carries out the reaction 8,9-epoxy-(5Z,11Z,14Z)-eicosatrienoate + H2O = 8,9-dihydroxy-(5Z,11Z,14Z)-eicosatrienoate. The enzyme catalyses 11,12-epoxy-(5Z,8Z,14Z)-eicosatrienoate + H2O = 11,12-dihydroxy-(5Z,8Z,14Z)-eicosatrienoate. It catalyses the reaction 2-(5Z,8Z,11Z,14Z-eicosatetraenoyl)-glycerol + H2O = glycerol + (5Z,8Z,11Z,14Z)-eicosatetraenoate + H(+). Its activity is regulated as follows. Inhibited by 10-hydroxystearamide and methoxy-arachidonyl fluorophosphate. Biotransformation enzyme that catalyzes the hydrolysis of arene and aliphatic epoxides to less reactive and more water soluble dihydrodiols by the trans addition of water. May play a role in the metabolism of endogenous lipids such as epoxide-containing fatty acids. Metabolizes the abundant endocannabinoid 2-arachidonoylglycerol (2-AG) to free arachidonic acid (AA) and glycerol. Binds 20(S)-hydroxycholesterol (20(S)-OHC). The protein is Epoxide hydrolase 1 of Mus musculus (Mouse).